The chain runs to 231 residues: Orotidine 5'-phosphate decarboxylase (231 aa).

Substrate contacts are provided by residues Asp11, Lys33, 60–69, Thr117, Arg178, Gln187, Gly207, and Arg208; that span reads DLKFHDIPNT. Lys62 (proton donor) is an active-site residue.

The protein belongs to the OMP decarboxylase family. Type 1 subfamily. In terms of assembly, homodimer.

It catalyses the reaction orotidine 5'-phosphate + H(+) = UMP + CO2. The protein operates within pyrimidine metabolism; UMP biosynthesis via de novo pathway; UMP from orotate: step 2/2. Its function is as follows. Catalyzes the decarboxylation of orotidine 5'-monophosphate (OMP) to uridine 5'-monophosphate (UMP). In Nitrosomonas eutropha (strain DSM 101675 / C91 / Nm57), this protein is Orotidine 5'-phosphate decarboxylase.